The following is a 121-amino-acid chain: Large ribosomal subunit protein uL18 (121 aa).

It belongs to the universal ribosomal protein uL18 family. In terms of assembly, part of the 50S ribosomal subunit; part of the 5S rRNA/L5/L18/L25 subcomplex. Contacts the 5S and 23S rRNAs.

Its function is as follows. This is one of the proteins that bind and probably mediate the attachment of the 5S RNA into the large ribosomal subunit, where it forms part of the central protuberance. This is Large ribosomal subunit protein uL18 from Mesomycoplasma hyopneumoniae (strain J / ATCC 25934 / NCTC 10110) (Mycoplasma hyopneumoniae).